Consider the following 541-residue polypeptide: 2-hydroxyacylsphingosine 1-beta-galactosyltransferase (541 aa).

The signal sequence occupies residues 1-20; the sequence is MKSYTPYFILLWSAVGIAKA. N-linked (GlcNAc...) asparagine glycans are attached at residues N78, N333, and N442. The helical transmembrane segment at 472 to 492 threads the bilayer; sequence YFLLDIAFVLLLGAALLYFLL.

It belongs to the UDP-glycosyltransferase family.

It is found in the membrane. It localises to the endoplasmic reticulum. The enzyme catalyses an N-acylsphing-4-enine + UDP-alpha-D-galactose = a beta-D-galactosyl-(1&lt;-&gt;1')-N-acylsphing-4-enine + UDP + H(+). The catalysed reaction is an N-acyl-sphingoid base + UDP-alpha-D-galactose = a D-galactosylceramide + UDP + H(+). It carries out the reaction N-(2-hydroxy-hexanoyl)-sphing-4-enine + UDP-alpha-D-galactose = N-(2-hydroxy-hexanoyl)-beta-D-galactosyl-sphing-4-enine + UDP + H(+). It catalyses the reaction N-(2-hydroxy-hexanoyl)-sphinganine + UDP-alpha-D-galactose = N-(2-hydroxyhexanoyl)-beta-D-galactosylsphinganine + UDP + H(+). Its pathway is sphingolipid metabolism; galactosylceramide biosynthesis. In terms of biological role, catalyzes the transfer of galactose to ceramide, a key enzymatic step in the biosynthesis of galactocerebrosides, which are abundant sphingolipids of the myelin membrane of the central nervous system and peripheral nervous system. Galactosylates both hydroxy- and non-hydroxy fatty acid-containing ceramides and diglycerides. The chain is 2-hydroxyacylsphingosine 1-beta-galactosyltransferase from Homo sapiens (Human).